The chain runs to 510 residues: NAD(P)H-quinone oxidoreductase subunit 2 B, chloroplastic (510 aa).

A run of 13 helical transmembrane segments spans residues leucine 24–leucine 44, tryptophan 59–tryptophan 79, isoleucine 99–isoleucine 119, methionine 124–cysteine 144, isoleucine 150–threonine 170, leucine 184–leucine 204, isoleucine 229–phenylalanine 249, tryptophan 295–isoleucine 315, methionine 323–aspartate 343, tyrosine 354–leucine 374, alanine 395–phenylalanine 415, leucine 418–leucine 438, and methionine 484–isoleucine 504.

Belongs to the complex I subunit 2 family. As to quaternary structure, NDH is composed of at least 16 different subunits, 5 of which are encoded in the nucleus.

Its subcellular location is the plastid. The protein localises to the chloroplast thylakoid membrane. It catalyses the reaction a plastoquinone + NADH + (n+1) H(+)(in) = a plastoquinol + NAD(+) + n H(+)(out). The enzyme catalyses a plastoquinone + NADPH + (n+1) H(+)(in) = a plastoquinol + NADP(+) + n H(+)(out). In terms of biological role, NDH shuttles electrons from NAD(P)H:plastoquinone, via FMN and iron-sulfur (Fe-S) centers, to quinones in the photosynthetic chain and possibly in a chloroplast respiratory chain. The immediate electron acceptor for the enzyme in this species is believed to be plastoquinone. Couples the redox reaction to proton translocation, and thus conserves the redox energy in a proton gradient. In Acorus calamus (Sweet flag), this protein is NAD(P)H-quinone oxidoreductase subunit 2 B, chloroplastic.